The sequence spans 170 residues: Xanthine-guanine phosphoribosyltransferase (170 aa).

5-phospho-alpha-D-ribose 1-diphosphate is bound by residues 41 to 42 (RG) and 98 to 106 (DDLTDTGKT). Asp-99 is a Mg(2+) binding site. Asp-102 is a binding site for guanine. Asp-102 provides a ligand contact to xanthine. 102–106 (DTGKT) contributes to the GMP binding site.

The protein belongs to the purine/pyrimidine phosphoribosyltransferase family. XGPT subfamily. Homotetramer. Requires Mg(2+) as cofactor.

It localises to the cell inner membrane. The catalysed reaction is GMP + diphosphate = guanine + 5-phospho-alpha-D-ribose 1-diphosphate. The enzyme catalyses XMP + diphosphate = xanthine + 5-phospho-alpha-D-ribose 1-diphosphate. It catalyses the reaction IMP + diphosphate = hypoxanthine + 5-phospho-alpha-D-ribose 1-diphosphate. The protein operates within purine metabolism; GMP biosynthesis via salvage pathway; GMP from guanine: step 1/1. Its pathway is purine metabolism; XMP biosynthesis via salvage pathway; XMP from xanthine: step 1/1. In terms of biological role, purine salvage pathway enzyme that catalyzes the transfer of the ribosyl-5-phosphate group from 5-phospho-alpha-D-ribose 1-diphosphate (PRPP) to the N9 position of the 6-oxopurines guanine and xanthine to form the corresponding ribonucleotides GMP (guanosine 5'-monophosphate) and XMP (xanthosine 5'-monophosphate), with the release of PPi. To a lesser extent, also acts on hypoxanthine. This Brucella abortus (strain 2308) protein is Xanthine-guanine phosphoribosyltransferase.